Consider the following 90-residue polypeptide: Mitochondrial import inner membrane translocase subunit Tim8 A (90 aa).

Residues 36-59 (CWDKCMDKPGPKLDSRAEMCFVNC) carry the Twin CX3C motif motif. 2 disulfides stabilise this stretch: Cys-36–Cys-59 and Cys-40–Cys-55.

Belongs to the small Tim family. In terms of assembly, heterohexamer; composed of 3 copies of TIMM8A and 3 copies of TIMM13, named soluble 70 kDa complex. Associates with the TIM22 complex, whose core is composed of TIMM22.

The protein resides in the mitochondrion inner membrane. Its function is as follows. Mitochondrial intermembrane chaperone that participates in the import and insertion of some multi-pass transmembrane proteins into the mitochondrial inner membrane. Also required for the transfer of beta-barrel precursors from the TOM complex to the sorting and assembly machinery (SAM complex) of the outer membrane. Acts as a chaperone-like protein that protects the hydrophobic precursors from aggregation and guide them through the mitochondrial intermembrane space. The TIMM8-TIMM13 complex mediates the import of some proteins while the predominant TIMM9-TIMM10 70 kDa complex mediates the import of much more proteins. The polypeptide is Mitochondrial import inner membrane translocase subunit Tim8 A (timm8a) (Takifugu rubripes (Japanese pufferfish)).